The primary structure comprises 331 residues: tRNA N6-adenosine threonylcarbamoyltransferase (331 aa).

His108, His112, and Tyr129 together coordinate a divalent metal cation. Substrate contacts are provided by residues 129 to 133, Asp161, Gly176, Glu180, and Asn261; that span reads YASGG. Asp289 is an a divalent metal cation binding site.

Belongs to the KAE1 / TsaD family. Component of the EKC/KEOPS complex composed of at least BUD32, CGI121, GON7, KAE1 and PCC1; the whole complex dimerizes. A divalent metal cation serves as cofactor.

Its subcellular location is the cytoplasm. The protein resides in the nucleus. The enzyme catalyses L-threonylcarbamoyladenylate + adenosine(37) in tRNA = N(6)-L-threonylcarbamoyladenosine(37) in tRNA + AMP + H(+). Component of the EKC/KEOPS complex that is required for the formation of a threonylcarbamoyl group on adenosine at position 37 (t(6)A37) in tRNAs that read codons beginning with adenine. The complex is probably involved in the transfer of the threonylcarbamoyl moiety of threonylcarbamoyl-AMP (TC-AMP) to the N6 group of A37. KAE1 likely plays a direct catalytic role in this reaction, but requires other protein(s) of the complex to fulfill this activity. The EKC/KEOPS complex also promotes both telomere uncapping and telomere elongation. The complex is required for efficient recruitment of transcriptional coactivators. This chain is tRNA N6-adenosine threonylcarbamoyltransferase, found in Encephalitozoon cuniculi (strain GB-M1) (Microsporidian parasite).